Consider the following 984-residue polypeptide: uncharacterized protein (984 aa).

Residues 941-984 are disordered; that stretch reads FGPSGPGPNQGPGDDYNNFKSTKYPRNGYNKYQPNNRIHSRNRY.

It localises to the virion. This is an uncharacterized protein from Acanthamoeba polyphaga (Amoeba).